Reading from the N-terminus, the 262-residue chain is MQTIIRVEKLAKTFNQHQALHAVDLNIHHGEMVALLGPSGSGKSTLLRHLSGLITGDKSVGSHIELLGRTVQREGRLARDIRKSRAHTGYIFQQFNLVNRLSVLENVLIGALGSTPFWRTCFSWFTGEQKQRALQALTRVGMVHFAHQRVSTLSGGQQQRVAIARALMQQAKVILADEPIASLDPESARIVMDTLRDINQNDGITVVVTLHQVDYALRYCERIVALRQGHVFYDGSSQQFDNERFDHLYRSINRVEENAKAA.

The ABC transporter domain occupies Ile-5–Asn-253. Residue Gly-37 to Ser-44 coordinates ATP.

This sequence belongs to the ABC transporter superfamily. Phosphonates importer (TC 3.A.1.9.1) family. The complex is composed of two ATP-binding proteins (PhnC), two transmembrane proteins (PhnE) and a solute-binding protein (PhnD).

It localises to the cell inner membrane. It catalyses the reaction phosphonate(out) + ATP + H2O = phosphonate(in) + ADP + phosphate + H(+). In terms of biological role, part of the ABC transporter complex PhnCDE involved in phosphonates, phosphate esters, phosphite and phosphate import. Responsible for energy coupling to the transport system. The chain is Phosphonates import ATP-binding protein PhnC from Escherichia coli (strain K12).